A 156-amino-acid polypeptide reads, in one-letter code: Arginine repressor (156 aa).

This sequence belongs to the ArgR family.

It is found in the cytoplasm. Its pathway is amino-acid biosynthesis; L-arginine biosynthesis [regulation]. Functionally, regulates arginine biosynthesis genes. This Photobacterium profundum (strain SS9) protein is Arginine repressor.